We begin with the raw amino-acid sequence, 118 residues long: UPF0344 protein BLi01172/BL01343 (118 aa).

The next 4 helical transmembrane spans lie at 6 to 26, 33 to 53, 62 to 82, and 89 to 109; these read ITSWVIALILVFVAYGLYSSG, ITHMILRLFYIIVIITGAQLF, EYIAKALLGLITIGFMEMLLI, and AATGIWIGFIVVLLLTVVLGL.

Belongs to the UPF0344 family.

The protein localises to the cell membrane. The sequence is that of UPF0344 protein BLi01172/BL01343 from Bacillus licheniformis (strain ATCC 14580 / DSM 13 / JCM 2505 / CCUG 7422 / NBRC 12200 / NCIMB 9375 / NCTC 10341 / NRRL NRS-1264 / Gibson 46).